A 446-amino-acid polypeptide reads, in one-letter code: Histidinol dehydrogenase homolog (446 aa).

Zn(2+) is bound at residue His266. Residues Glu334 and His335 each act as proton acceptor in the active site. A Zn(2+)-binding site is contributed by His427.

The protein belongs to the histidinol dehydrogenase family. Zn(2+) is required as a cofactor.

In Colwellia psychrerythraea (strain 34H / ATCC BAA-681) (Vibrio psychroerythus), this protein is Histidinol dehydrogenase homolog.